The following is a 413-amino-acid chain: MADVSNSEPAIVSPWLTVIGIGEDGVAGLGDEAKRLIAEAPVVYGGHRHLELAASLITGEAHNWLSPLERSVVEIVARRGSPVVVLASGDPFFFGVGVTLARRIASAEIRTLPAPSSISLAASRLGWALQDATLVSVHGRPLDLVRPHLHPGARVLTLTSDGAGPRDLAELLVSSGFGQSRLTVLEALGGAGERVTTQIAARFMLGLVHPLNVCAIEVAADEGARILPLAAGRDDALFEHDGQITKREVRALTLSALAPRKGELLWDIGGGSGSIGIEWMLADPTMQAITIEVEPERAARIGRNATMFGVPGLTVVEGEAPAALAGLPQPDAIFIGGGGSEDGVMEAAIEALKSGGRLVANAVTTDMEAVLLDHHARLGGSLIRIDIARAGPIGGMTGWKPAMPVTQWSWTKG.

The protein belongs to the precorrin methyltransferase family.

The enzyme catalyses precorrin-6B + 2 S-adenosyl-L-methionine = precorrin-8X + 2 S-adenosyl-L-homocysteine + CO2 + 3 H(+). Its pathway is cofactor biosynthesis; adenosylcobalamin biosynthesis; cob(II)yrinate a,c-diamide from precorrin-2 (aerobic route): step 7/10. Catalyzes the methylation of both C-5 and C-15 in precorrin-6Y to form precorrin-8X. This Sinorhizobium sp protein is Precorrin-6Y C(5,15)-methyltransferase [decarboxylating] (cobL).